Consider the following 470-residue polypeptide: ATP synthase subunit beta (470 aa).

157 to 164 (GGAGVGKT) serves as a coordination point for ATP.

The protein belongs to the ATPase alpha/beta chains family. In terms of assembly, F-type ATPases have 2 components, CF(1) - the catalytic core - and CF(0) - the membrane proton channel. CF(1) has five subunits: alpha(3), beta(3), gamma(1), delta(1), epsilon(1). CF(0) has three main subunits: a(1), b(2) and c(9-12). The alpha and beta chains form an alternating ring which encloses part of the gamma chain. CF(1) is attached to CF(0) by a central stalk formed by the gamma and epsilon chains, while a peripheral stalk is formed by the delta and b chains.

The protein localises to the cell inner membrane. It carries out the reaction ATP + H2O + 4 H(+)(in) = ADP + phosphate + 5 H(+)(out). In terms of biological role, produces ATP from ADP in the presence of a proton gradient across the membrane. The catalytic sites are hosted primarily by the beta subunits. The sequence is that of ATP synthase subunit beta from Geobacter sulfurreducens (strain ATCC 51573 / DSM 12127 / PCA).